The following is a 109-amino-acid chain: Large ribosomal subunit protein uL24 (109 aa).

Belongs to the universal ribosomal protein uL24 family. Part of the 50S ribosomal subunit.

Its function is as follows. One of two assembly initiator proteins, it binds directly to the 5'-end of the 23S rRNA, where it nucleates assembly of the 50S subunit. In terms of biological role, one of the proteins that surrounds the polypeptide exit tunnel on the outside of the subunit. This is Large ribosomal subunit protein uL24 from Legionella pneumophila (strain Paris).